A 468-amino-acid polypeptide reads, in one-letter code: Adenosylhomocysteinase (468 aa).

Substrate-binding residues include Thr-57, Asp-132, and Glu-194. 195–197 (TTT) lines the NAD(+) pocket. 2 residues coordinate substrate: Lys-224 and Asp-228. NAD(+) is bound by residues Asn-229, 258-263 (GFGDVG), Glu-281, Asn-316, 337-339 (IGH), and Asn-382.

The protein belongs to the adenosylhomocysteinase family. The cofactor is NAD(+).

Its subcellular location is the cytoplasm. It catalyses the reaction S-adenosyl-L-homocysteine + H2O = L-homocysteine + adenosine. It participates in amino-acid biosynthesis; L-homocysteine biosynthesis; L-homocysteine from S-adenosyl-L-homocysteine: step 1/1. Its function is as follows. May play a key role in the regulation of the intracellular concentration of adenosylhomocysteine. The polypeptide is Adenosylhomocysteinase (Methylorubrum populi (strain ATCC BAA-705 / NCIMB 13946 / BJ001) (Methylobacterium populi)).